The following is a 451-amino-acid chain: Chromosomal replication initiator protein DnaA (451 aa).

A domain I, interacts with DnaA modulators region spans residues 1–72 (MQSIEDIWQE…ANILQEITGR (72 aa)). Positions 72-108 (RLFDVRFIDGEQEENFEYTVIKPNPALDEDGIEIGKH) are domain II. Residues 109 to 325 (MLNPRYVFDT…GALIRVVAYS (217 aa)) form a domain III, AAA+ region region. Glycine 153, glycine 155, lysine 156, and threonine 157 together coordinate ATP. Positions 326–451 (SLVNKDITAG…KNLRKSQNMF (126 aa)) are domain IV, binds dsDNA.

This sequence belongs to the DnaA family. Oligomerizes as a right-handed, spiral filament on DNA at oriC.

Its subcellular location is the cytoplasm. Functionally, plays an essential role in the initiation and regulation of chromosomal replication. ATP-DnaA binds to the origin of replication (oriC) to initiate formation of the DNA replication initiation complex once per cell cycle. Binds the DnaA box (a 9 base pair repeat at the origin) and separates the double-stranded (ds)DNA. Forms a right-handed helical filament on oriC DNA; dsDNA binds to the exterior of the filament while single-stranded (ss)DNA is stabiized in the filament's interior. The ATP-DnaA-oriC complex binds and stabilizes one strand of the AT-rich DNA unwinding element (DUE), permitting loading of DNA polymerase. After initiation quickly degrades to an ADP-DnaA complex that is not apt for DNA replication. Binds acidic phospholipids. This chain is Chromosomal replication initiator protein DnaA, found in Listeria welshimeri serovar 6b (strain ATCC 35897 / DSM 20650 / CCUG 15529 / CIP 8149 / NCTC 11857 / SLCC 5334 / V8).